The chain runs to 411 residues: Protein translocase subunit SecY (411 aa).

Transmembrane regions (helical) follow at residues 13 to 33 (FTLLLLVLARLGIFIPVPGID), 52 to 72 (IFSGGGFSTIGIFALGIVPYI), 111 to 131 (ALGWATLQSGAISIWVKPYVF), 135 to 155 (FTFVCESVLALTAGSMIIMWL), 163 to 180 (GIGNGASLLIFQNIVSGL), 197 to 217 (SIKFGLFIVIFLLMIIITIFV), 252 to 272 (GVMPIVFASASMALPAYLTQL), 291 to 311 (LYLVLYSVLILFFSYFYTSIV), 350 to 370 (FLGATFLFTVALIPFIIEKVA), and 377 to 397 (GLGATSLLILVGVAIDTAKQI).

This sequence belongs to the SecY/SEC61-alpha family. Component of the plastid Sec protein translocase complex, which is composed of at least SecY, SecE and SecG.

It is found in the plastid. Its subcellular location is the chloroplast thylakoid membrane. The central subunit of the protein translocation channel SecYE. Consists of two halves formed by TMs 1-5 and 6-10. These two domains form a lateral gate at the front which open onto the bilayer between TMs 2 and 7, and are clamped together by SecE at the back. The channel is closed by both a pore ring composed of hydrophobic SecY resides and a short helix (helix 2A) on the extracellular side of the membrane which forms a plug. This chain is Protein translocase subunit SecY, found in Porphyra purpurea (Red seaweed).